The primary structure comprises 276 residues: 1H-3-hydroxy-4-oxoquinaldine 2,4-dioxygenase (276 aa).

Residues 28–150 (PAILLLPGWC…TLLKDPERWR (123 aa)) form the AB hydrolase-1 domain. Substrate-binding positions include 36 to 38 (WCH), 100 to 101 (HS), and Trp-160. His-251 (proton donor/acceptor) is an active-site residue.

Belongs to the AB hydrolase superfamily. It depends on None. Contrary to most other dioxygenases, this enzyme does not require a cofactor for catalysis. as a cofactor.

It carries out the reaction 3-hydroxy-2-methyl-1H-quinolin-4-one + O2 = N-acetylanthranilate + CO + H(+). Functionally, ring-cleaving dioxygenase involved in quinaldine degradation and utilization. This chain is 1H-3-hydroxy-4-oxoquinaldine 2,4-dioxygenase (hod), found in Paenarthrobacter nitroguajacolicus (Arthrobacter nitroguajacolicus).